A 152-amino-acid chain; its full sequence is MNPAHLLVLLAVCVSLLGASTIPPLPLNLVQFSNMIKCTIPGSRPLLDYADYGCYCGAGGSGTPVDELDRCCQTHDNCYSQAKKHPACKSPLDSPYIKIYSYTCSGGSLTCRDDNDECGAFICNCDRTAAICFAGAPYNKENYNIDTKKHCK.

The first 21 residues, 1–21 (MNPAHLLVLLAVCVSLLGAST), serve as a signal peptide directing secretion. A propeptide spanning residues 22–27 (IPPLPL) is cleaved from the precursor. Cystine bridges form between Cys-38–Cys-104, Cys-54–Cys-151, Cys-56–Cys-72, Cys-71–Cys-132, Cys-78–Cys-125, Cys-88–Cys-118, and Cys-111–Cys-123. Positions 55, 57, and 59 each coordinate Ca(2+). The active site involves His-75. Asp-76 lines the Ca(2+) pocket. Asp-126 is an active-site residue.

Belongs to the phospholipase A2 family. Group I subfamily. Ca(2+) serves as cofactor.

Its subcellular location is the secreted. The enzyme catalyses a 1,2-diacyl-sn-glycero-3-phosphocholine + H2O = a 1-acyl-sn-glycero-3-phosphocholine + a fatty acid + H(+). PA2 catalyzes the calcium-dependent hydrolysis of the 2-acyl groups in 3-sn-phosphoglycerides. The protein is Phospholipase A2 GL16-1 of Laticauda semifasciata (Black-banded sea krait).